Consider the following 37-residue polypeptide: Large ribosomal subunit protein bL36 (37 aa).

This sequence belongs to the bacterial ribosomal protein bL36 family.

The polypeptide is Large ribosomal subunit protein bL36 (Acetivibrio thermocellus (strain ATCC 27405 / DSM 1237 / JCM 9322 / NBRC 103400 / NCIMB 10682 / NRRL B-4536 / VPI 7372) (Clostridium thermocellum)).